The following is a 213-amino-acid chain: MEQYKHDFIEFALSRNVLKFGEFTLKSGRKSPYFFNAGLFNTGRDLAKLGEFYAQAIQASGLNFDVLFGPAYKGIPIATTVAVALVNQFDVDKPCCFNRKEAKDHGEGGNLIGSPLKGRILLVDDVITAGTAIRESMEIINANQAELAGVLIALNRKEKGKGELSAIQEVERDYGCQVFSIIDFDDLIQFIEKSEQYAPYLASMRAYREQYGV.

Lys26 lines the 5-phospho-alpha-D-ribose 1-diphosphate pocket. 34 to 35 is a binding site for orotate; it reads FF. Residues 72-73, Arg99, Lys100, Lys103, His105, and 124-132 each bind 5-phospho-alpha-D-ribose 1-diphosphate; these read YK and DDVITAGTA. 2 residues coordinate orotate: Thr128 and Arg156.

It belongs to the purine/pyrimidine phosphoribosyltransferase family. PyrE subfamily. Homodimer. It depends on Mg(2+) as a cofactor.

It catalyses the reaction orotidine 5'-phosphate + diphosphate = orotate + 5-phospho-alpha-D-ribose 1-diphosphate. It functions in the pathway pyrimidine metabolism; UMP biosynthesis via de novo pathway; UMP from orotate: step 1/2. In terms of biological role, catalyzes the transfer of a ribosyl phosphate group from 5-phosphoribose 1-diphosphate to orotate, leading to the formation of orotidine monophosphate (OMP). The protein is Orotate phosphoribosyltransferase of Actinobacillus pleuropneumoniae serotype 5b (strain L20).